The following is a 131-amino-acid chain: Leptin receptor overlapping transcript-like 1 (131 aa).

4 consecutive transmembrane segments (helical) span residues 7–27 (LISL…GCAL), 32–52 (QYWP…YCIA), 69–89 (LAIF…VVFA), and 100–120 (ALVL…FLVF).

It belongs to the OB-RGRP/VPS55 family. As to quaternary structure, interacts with RAB13.

It localises to the membrane. Its function is as follows. Negatively regulates growth hormone (GH) receptor cell surface expression in liver. May play a role in liver resistance to GH during periods of reduced nutrient availability. The chain is Leptin receptor overlapping transcript-like 1 (Leprotl1) from Mus musculus (Mouse).